A 755-amino-acid chain; its full sequence is Dolichyl-phosphate-mannose--protein mannosyltransferase 4 (755 aa).

Residues 1 to 23 (MSQTLKKRGGNSSGRKSPTTSNI) are disordered. N11 carries an N-linked (GlcNAc...) asparagine glycan. Polar residues predominate over residues 13-23 (SGRKSPTTSNI). 6 helical membrane-spanning segments follow: residues 92–112 (FFDLHPPFAKLLIAFVGWLIG), 147–167 (IVPIMFLTMKTLGFSVAACLF), 185–205 (ILLDATLILSVALTIFSYSKF), 212–232 (SFSSKWWTWLLATGVSLSCVI), 237–257 (VGVFTYLTIGIAVIHELWILL), and 278–298 (ALIIVPFCIYLYWFYLHFAIL). 3 MIR domains span residues 325 to 389 (SKPV…IVPT), 396 to 454 (GTKV…LRLH), and 466 to 523 (KKEI…FDLI). An N-linked (GlcNAc...) asparagine glycan is attached at N445. 3 helical membrane passes run 595–615 (IFFIGNIIGFWLEVCFLSIYI), 640–660 (LYNTLGFLFVGWAAHYLPFFL), and 670–690 (YLPAHLVAALFSGGLVEFICS). A glycan (N-linked (GlcNAc...) asparagine) is linked at N691. A helical transmembrane segment spans residues 706 to 726 (YKIIAVVAACSTAIIWFFFYF).

This sequence belongs to the glycosyltransferase 39 family. In terms of assembly, forms a functional homodimer.

The protein resides in the endoplasmic reticulum membrane. It carries out the reaction a di-trans,poly-cis-dolichyl beta-D-mannosyl phosphate + L-seryl-[protein] = 3-O-(alpha-D-mannosyl)-L-seryl-[protein] + a di-trans,poly-cis-dolichyl phosphate + H(+). The catalysed reaction is a di-trans,poly-cis-dolichyl beta-D-mannosyl phosphate + L-threonyl-[protein] = 3-O-(alpha-D-mannosyl)-L-threonyl-[protein] + a di-trans,poly-cis-dolichyl phosphate + H(+). It participates in protein modification; protein glycosylation. Protein mannosyltransferase (PMT) involved in hyphal growth and drug sensitivity. Transfers mannose from Dol-P-mannose to Ser or Thr residues on proteins. PMT1, PMT2 and PMT4 account for most of the protein-O-glycosylation activity, while PMT5 and PMT6 may specifically modulate a much narrower spectrum of target proteins. Accounts for the O-glycosylation of AXL2, responsible for bud site selection, as well as of the SEC20 t-SNARE component. O-glycosylation of SEC20 is essential for its stability. Required for biofilm formation. The polypeptide is Dolichyl-phosphate-mannose--protein mannosyltransferase 4 (Candida albicans (strain SC5314 / ATCC MYA-2876) (Yeast)).